Here is a 423-residue protein sequence, read N- to C-terminus: D-tagatose-1,6-bisphosphate aldolase subunit GatZ (423 aa).

It belongs to the GatZ/KbaZ family. GatZ subfamily. Forms a complex with GatY.

Its pathway is carbohydrate metabolism; D-tagatose 6-phosphate degradation; D-glyceraldehyde 3-phosphate and glycerone phosphate from D-tagatose 6-phosphate: step 2/2. In terms of biological role, component of the tagatose-1,6-bisphosphate aldolase GatYZ that is required for full activity and stability of the Y subunit. Could have a chaperone-like function for the proper and stable folding of GatY. When expressed alone, GatZ does not show any aldolase activity. Is involved in the catabolism of galactitol. This is D-tagatose-1,6-bisphosphate aldolase subunit GatZ from Salmonella enteritidis PT4 (strain P125109).